Here is a 167-residue protein sequence, read N- to C-terminus: MNVDFIAGINNLGEKIYTCEPFKTSFQNPFIVALIITAVVLVVFFAICNPPVDKKRKTKTAIYLYICIVALLFLHYYVLNHQLNDIYNKSNMDVIVSSIHDKYKGGDEIIPPVSPPSISNELEEDRPKKILAGSKLAGLADSKPAEPAVSKPLVPLQEVIMPSQYNN.

2 helical membrane passes run 28–48 (NPFI…FAIC) and 60–80 (TAIY…YVLN). The N-linked (GlcNAc...) asparagine; by host glycan is linked to Asn88.

This sequence belongs to the asfivirus B169L family.

It localises to the host membrane. It is found in the virion. In African swine fever virus (isolate Tick/Malawi/Lil 20-1/1983) (ASFV), this protein is Transmembrane protein B169L.